The sequence spans 315 residues: Homoserine kinase (315 aa).

Position 97–107 (97–107) interacts with ATP; the sequence is PPARGLGSSAT.

It belongs to the GHMP kinase family. Homoserine kinase subfamily.

It localises to the cytoplasm. It carries out the reaction L-homoserine + ATP = O-phospho-L-homoserine + ADP + H(+). The protein operates within amino-acid biosynthesis; L-threonine biosynthesis; L-threonine from L-aspartate: step 4/5. Its function is as follows. Catalyzes the ATP-dependent phosphorylation of L-homoserine to L-homoserine phosphate. This Parasynechococcus marenigrum (strain WH8102) protein is Homoserine kinase.